A 148-amino-acid chain; its full sequence is MGGLDGEQKLLIKKLVNFRMKEGKRTRVRAIVYQTFHRPARTERDVIKLMVDAVENIKPICEVAKVGVAGTIYDVPGIVARDRQQTLAIRWILEAAFKRRISYRISLEKCSFAEILDAYQKRGSARRKRENLHGLASTNRSFAHFRWW.

Belongs to the universal ribosomal protein uS7 family. In terms of assembly, part of the small ribosomal subunit.

Its subcellular location is the mitochondrion. Its function is as follows. One of the primary rRNA binding proteins, it binds directly to 18S rRNA where it nucleates assembly of the head domain of the small subunit. The sequence is that of Small ribosomal subunit protein uS7m (RPS7) from Arabidopsis thaliana (Mouse-ear cress).